The following is a 278-amino-acid chain: Tryptophan synthase alpha chain (278 aa).

Active-site proton acceptor residues include Glu49 and Asp60.

It belongs to the TrpA family. Tetramer of two alpha and two beta chains.

It carries out the reaction (1S,2R)-1-C-(indol-3-yl)glycerol 3-phosphate + L-serine = D-glyceraldehyde 3-phosphate + L-tryptophan + H2O. Its pathway is amino-acid biosynthesis; L-tryptophan biosynthesis; L-tryptophan from chorismate: step 5/5. Functionally, the alpha subunit is responsible for the aldol cleavage of indoleglycerol phosphate to indole and glyceraldehyde 3-phosphate. This is Tryptophan synthase alpha chain from Corynebacterium diphtheriae (strain ATCC 700971 / NCTC 13129 / Biotype gravis).